The sequence spans 398 residues: Odorant receptor 24a (398 aa).

The Cytoplasmic segment spans residues 1 to 14 (MLPRFLTASYPMER). A helical transmembrane segment spans residues 15 to 31 (HYFMVPKFALSLIGFYP). Over 32-46 (EQKRTVLVKLWSFFN) the chain is Extracellular. A helical membrane pass occupies residues 47-67 (FFILTYGCYAEAYYGIHYIPI). At 68–74 (NIATALD) the chain is on the cytoplasmic side. The helical transmembrane segment at 75 to 95 (ALCPVASSILSLVKMVAIWWY) threads the bilayer. Topologically, residues 96 to 124 (QDELRSLIERVRFLTEQQKSKRKLGYKKR) are extracellular. Residues 125–145 (FYTLATQLTFLLLCCGFCTST) traverse the membrane as a helical segment. Residues 146-199 (SYSVRHLIDNILRRTHGKDWIYETPFKMMFPDLLLRLPLYPITYILVHWHGYIT) are Cytoplasmic-facing. Residues 200–220 (VVCFVGADGFFLGFCLYFTVL) traverse the membrane as a helical segment. Topologically, residues 221–269 (LLCLQDDVCDLLEVENIEKSPSEAEEARIVREMEKLVDRHNEVAELTER) are extracellular. A helical transmembrane segment spans residues 270–290 (LSGVMVEITLAHFVTSSLIIG). The Cytoplasmic segment spans residues 291–295 (TSVVD). Residues 296–316 (ILLFSGLGIIVYVVYTCAVGV) form a helical membrane-spanning segment. The Extracellular portion of the chain corresponds to 317-398 (EIFLYCLGGS…SLIALAKSVI (82 aa)).

It belongs to the insect chemoreceptor superfamily. Heteromeric odorant receptor channel (TC 1.A.69) family. Or1a subfamily. Interacts with Orco. Complexes exist early in the endomembrane system in olfactory sensory neurons (OSNs), coupling these complexes to the conserved ciliary trafficking pathway. Not expressed in either the antenna or maxillary palp.

It is found in the cell membrane. Odorant receptor which mediates acceptance or avoidance behavior, depending on its substrates. The odorant receptor repertoire encodes a large collection of odor stimuli that vary widely in identity, intensity, and duration. May form a complex with Orco to form odorant-sensing units, providing sensitive and prolonged odorant signaling and calcium permeability. Involved in the behavioral responses to pentanol, hexanol, octanol, nonanol, propyl acetate, butyl acetate, isoamyl acetate, methyl caproate, anisole, heptanal, 2-heptanone, r-carvone, and nonanoic acid. Also responds to pyrazines. This is Odorant receptor 24a (Or24a) from Drosophila melanogaster (Fruit fly).